Here is a 446-residue protein sequence, read N- to C-terminus: Asparagine--tRNA ligase (446 aa).

This sequence belongs to the class-II aminoacyl-tRNA synthetase family. Homodimer.

It localises to the cytoplasm. The enzyme catalyses tRNA(Asn) + L-asparagine + ATP = L-asparaginyl-tRNA(Asn) + AMP + diphosphate + H(+). The polypeptide is Asparagine--tRNA ligase (Sorangium cellulosum (strain So ce56) (Polyangium cellulosum (strain So ce56))).